We begin with the raw amino-acid sequence, 615 residues long: uncharacterized protein (615 aa).

D403 functions as the Proton acceptor in the catalytic mechanism. E406 (proton donor) is an active-site residue.

It belongs to the glycosyl hydrolase 15 family.

This is an uncharacterized protein from Methanocaldococcus jannaschii (strain ATCC 43067 / DSM 2661 / JAL-1 / JCM 10045 / NBRC 100440) (Methanococcus jannaschii).